Reading from the N-terminus, the 132-residue chain is Small ribosomal subunit protein uS8 (132 aa).

It belongs to the universal ribosomal protein uS8 family. Part of the 30S ribosomal subunit. Contacts proteins S5 and S12.

In terms of biological role, one of the primary rRNA binding proteins, it binds directly to 16S rRNA central domain where it helps coordinate assembly of the platform of the 30S subunit. The sequence is that of Small ribosomal subunit protein uS8 from Leptospira biflexa serovar Patoc (strain Patoc 1 / Ames).